We begin with the raw amino-acid sequence, 443 residues long: Trigger factor (443 aa).

Residues 169–254 (GDIAFLDFSG…LNSIKEVQLP (86 aa)) form the PPIase FKBP-type domain.

It belongs to the FKBP-type PPIase family. Tig subfamily.

The protein localises to the cytoplasm. The catalysed reaction is [protein]-peptidylproline (omega=180) = [protein]-peptidylproline (omega=0). In terms of biological role, involved in protein export. Acts as a chaperone by maintaining the newly synthesized protein in an open conformation. Functions as a peptidyl-prolyl cis-trans isomerase. The sequence is that of Trigger factor from Mycoplasmoides gallisepticum (strain R(low / passage 15 / clone 2)) (Mycoplasma gallisepticum).